A 179-amino-acid chain; its full sequence is Peroxiredoxin (179 aa).

The Thioredoxin domain maps to T2–F152. The active-site Cysteine sulfenic acid (-SOH) intermediate (for peroxiredoxin activity) is C56.

The protein belongs to the peroxiredoxin family. Prx5 subfamily. Monomer.

The enzyme catalyses a hydroperoxide + 2 glutathione = an alcohol + glutathione disulfide + H2O. In terms of biological role, thiol-specific peroxidase that catalyzes the reduction of hydrogen peroxide and organic hydroperoxides to water and alcohols, respectively. Plays a role in cell protection against oxidative stress by detoxifying peroxides. This chain is Peroxiredoxin, found in Rhizobium etli.